The primary structure comprises 563 residues: Methylcrotonoyl-CoA carboxylase beta chain, mitochondrial (563 aa).

Residues M1 to A22 constitute a mitochondrion transit peptide. Residues M49–P306 form the CoA carboxyltransferase N-terminal domain. The segment at M49–R555 is carboxyltransferase. K70 is subject to N6-acetyllysine; alternate. Position 70 is an N6-succinyllysine; alternate (K70). At K141 the chain carries N6-succinyllysine. In terms of domain architecture, CoA carboxyltransferase C-terminal spans E309–R555. The segment at R343–N372 is acyl-CoA binding. An N6-succinyllysine modification is found at K433. Position 495 is an N6-acetyllysine; alternate (K495). Residue K495 is modified to N6-succinyllysine; alternate. N6-acetyllysine is present on K511.

Belongs to the AccD/PCCB family. As to quaternary structure, probably a dodecamer composed of six biotin-containing alpha subunits (MCCC1) and six beta (MCCC2) subunits.

The protein resides in the mitochondrion matrix. The enzyme catalyses 3-methylbut-2-enoyl-CoA + hydrogencarbonate + ATP = 3-methyl-(2E)-glutaconyl-CoA + ADP + phosphate + H(+). It functions in the pathway amino-acid degradation; L-leucine degradation; (S)-3-hydroxy-3-methylglutaryl-CoA from 3-isovaleryl-CoA: step 2/3. In terms of biological role, carboxyltransferase subunit of the 3-methylcrotonyl-CoA carboxylase, an enzyme that catalyzes the conversion of 3-methylcrotonyl-CoA to 3-methylglutaconyl-CoA, a critical step for leucine and isovaleric acid catabolism. In Rattus norvegicus (Rat), this protein is Methylcrotonoyl-CoA carboxylase beta chain, mitochondrial (Mccc2).